A 513-amino-acid chain; its full sequence is Trigger factor (513 aa).

One can recognise a PPIase FKBP-type domain in the interval 164-249; that stretch reads GDQIIIDFLG…VKAVKNAGEF (86 aa). The disordered stretch occupies residues 436-513; sequence QAAIEAEEGA…KAPAKKKAEG (78 aa). Over residues 452 to 461 the composition is skewed to basic residues; sequence AKKAPAKKKA. Positions 489–498 are enriched in low complexity; sequence ADEAPAAEEA. Positions 501–513 are enriched in basic residues; the sequence is AKKKAPAKKKAEG.

This sequence belongs to the FKBP-type PPIase family. Tig subfamily.

The protein resides in the cytoplasm. The enzyme catalyses [protein]-peptidylproline (omega=180) = [protein]-peptidylproline (omega=0). Functionally, involved in protein export. Acts as a chaperone by maintaining the newly synthesized protein in an open conformation. Functions as a peptidyl-prolyl cis-trans isomerase. The sequence is that of Trigger factor from Novosphingobium aromaticivorans (strain ATCC 700278 / DSM 12444 / CCUG 56034 / CIP 105152 / NBRC 16084 / F199).